Consider the following 180-residue polypeptide: MIIYLHGFDSNSPGNHEKVLQLQFIDPDVRLVSYSTRHPKHDMQHLLKEVDKMLQLNVDDRPLICGVGLGGYWAERIGFLCDIRQVVFNPNLFPYENMEGKIDRPEEYADIATKCVTNFREKNRDRCLVILSRHDEALDSQRSAEALHPYYEIVWDEEQTHKFKNISPHLQRIKAFKTLG.

Belongs to the UPF0227 family.

The sequence is that of UPF0227 protein YcfP from Salmonella arizonae (strain ATCC BAA-731 / CDC346-86 / RSK2980).